The primary structure comprises 65 residues: Keratin-associated protein 20-2 (65 aa).

Belongs to the KRTAP type 20 family. Interacts with hair keratins.

Functionally, in the hair cortex, hair keratin intermediate filaments are embedded in an interfilamentous matrix, consisting of hair keratin-associated proteins (KRTAP), which are essential for the formation of a rigid and resistant hair shaft through their extensive disulfide bond cross-linking with abundant cysteine residues of hair keratins. The matrix proteins include the high-sulfur and high-glycine-tyrosine keratins. The chain is Keratin-associated protein 20-2 (KRTAP20-2) from Homo sapiens (Human).